The primary structure comprises 496 residues: Aspartyl/glutamyl-tRNA(Asn/Gln) amidotransferase subunit B (496 aa).

This sequence belongs to the GatB/GatE family. GatB subfamily. As to quaternary structure, heterotrimer of A, B and C subunits.

It carries out the reaction L-glutamyl-tRNA(Gln) + L-glutamine + ATP + H2O = L-glutaminyl-tRNA(Gln) + L-glutamate + ADP + phosphate + H(+). The enzyme catalyses L-aspartyl-tRNA(Asn) + L-glutamine + ATP + H2O = L-asparaginyl-tRNA(Asn) + L-glutamate + ADP + phosphate + 2 H(+). Its function is as follows. Allows the formation of correctly charged Asn-tRNA(Asn) or Gln-tRNA(Gln) through the transamidation of misacylated Asp-tRNA(Asn) or Glu-tRNA(Gln) in organisms which lack either or both of asparaginyl-tRNA or glutaminyl-tRNA synthetases. The reaction takes place in the presence of glutamine and ATP through an activated phospho-Asp-tRNA(Asn) or phospho-Glu-tRNA(Gln). This is Aspartyl/glutamyl-tRNA(Asn/Gln) amidotransferase subunit B from Picosynechococcus sp. (strain ATCC 27264 / PCC 7002 / PR-6) (Agmenellum quadruplicatum).